Consider the following 217-residue polypeptide: Ribosomal RNA small subunit methyltransferase G (217 aa).

S-adenosyl-L-methionine is bound by residues Gly-78, Phe-83, Ala-129–Glu-130, and Arg-146.

This sequence belongs to the methyltransferase superfamily. RNA methyltransferase RsmG family.

It localises to the cytoplasm. The enzyme catalyses guanosine(527) in 16S rRNA + S-adenosyl-L-methionine = N(7)-methylguanosine(527) in 16S rRNA + S-adenosyl-L-homocysteine. In terms of biological role, specifically methylates the N7 position of guanine in position 527 of 16S rRNA. In Geobacter sp. (strain M21), this protein is Ribosomal RNA small subunit methyltransferase G.